An 82-amino-acid chain; its full sequence is MVTIRLARGGAKKRPFYQVVVTDSRNARDGRFIERVGFFNPIATGQAEALRLDLDRIEHWLGLGATVSDRVSSLIKDAKKAA.

The protein belongs to the bacterial ribosomal protein bS16 family.

This Pectobacterium atrosepticum (strain SCRI 1043 / ATCC BAA-672) (Erwinia carotovora subsp. atroseptica) protein is Small ribosomal subunit protein bS16.